Consider the following 501-residue polypeptide: Cytochrome P450 monooxygenase janQ (501 aa).

A helical transmembrane segment spans residues 1–16 (MVLGLLAFIWLMRAWR). An N-linked (GlcNAc...) asparagine glycan is attached at N132. C439 contributes to the heme binding site.

It belongs to the cytochrome P450 family. Heme is required as a cofactor.

The protein localises to the membrane. It participates in secondary metabolite biosynthesis. Its function is as follows. Cytochrome P450 monooxygenase; part of the gene cluster that mediates the biosynthesis of the indole diterpenes janthitremanes such as shearinine K or shearinine A. The geranylgeranyl diphosphate (GGPP) synthase janG catalyzes the first step in janthitremane biosynthesis via conversion of farnesyl pyrophosphate and isopentyl pyrophosphate into geranylgeranyl pyrophosphate (GGPP). Condensation of indole-3-glycerol phosphate with GGPP by the prenyl transferase janC then forms 3-geranylgeranylindole (3-GGI). Epoxidation by the FAD-dependent monooxygenase janM leads to a epoxidized-GGI that is substrate of the terpene cyclase janB for cyclization to yield paspaline. Paspaline is subsequently converted to 13-desoxypaspaline by the cytochrome P450 monooxygenase janP, via beta-PC-M6 in a series of alpha-face oxidations. The cytochrome P450 monooxygenase janQ is proposed to carry out sequential beta-face oxidation steps at C-7 and C-13 of 13-desoxypaspaline to form paspalicine and paspalinine respectively. The indole diterpene prenyltransferase janD may then convert paspalinine into shearinine K which is substrate of janO and/or additional enzymes for oxidation and cyclization to generate shearinine A. This is Cytochrome P450 monooxygenase janQ from Penicillium janthinellum (Penicillium vitale).